The primary structure comprises 436 residues: UPF0597 protein DP0591 (436 aa).

This sequence belongs to the UPF0597 family.

The protein is UPF0597 protein DP0591 of Desulfotalea psychrophila (strain LSv54 / DSM 12343).